A 440-amino-acid polypeptide reads, in one-letter code: Glutamyl-tRNA reductase (440 aa).

Residues 50–53 (TCNR), serine 109, 114–116 (EPQ), and glutamine 120 contribute to the substrate site. Cysteine 51 (nucleophile) is an active-site residue. 189 to 194 (GAGEMA) is a binding site for NADP(+).

It belongs to the glutamyl-tRNA reductase family. As to quaternary structure, homodimer.

It catalyses the reaction (S)-4-amino-5-oxopentanoate + tRNA(Glu) + NADP(+) = L-glutamyl-tRNA(Glu) + NADPH + H(+). Its pathway is porphyrin-containing compound metabolism; protoporphyrin-IX biosynthesis; 5-aminolevulinate from L-glutamyl-tRNA(Glu): step 1/2. Its function is as follows. Catalyzes the NADPH-dependent reduction of glutamyl-tRNA(Glu) to glutamate 1-semialdehyde (GSA). The protein is Glutamyl-tRNA reductase of Nitratidesulfovibrio vulgaris (strain ATCC 29579 / DSM 644 / CCUG 34227 / NCIMB 8303 / VKM B-1760 / Hildenborough) (Desulfovibrio vulgaris).